The chain runs to 317 residues: Transaldolase (317 aa).

The active-site Schiff-base intermediate with substrate is the K132.

The protein belongs to the transaldolase family. Type 1 subfamily. Homodimer.

It localises to the cytoplasm. The catalysed reaction is D-sedoheptulose 7-phosphate + D-glyceraldehyde 3-phosphate = D-erythrose 4-phosphate + beta-D-fructose 6-phosphate. The protein operates within carbohydrate degradation; pentose phosphate pathway; D-glyceraldehyde 3-phosphate and beta-D-fructose 6-phosphate from D-ribose 5-phosphate and D-xylulose 5-phosphate (non-oxidative stage): step 2/3. Functionally, transaldolase is important for the balance of metabolites in the pentose-phosphate pathway. The sequence is that of Transaldolase from Haemophilus influenzae (strain PittGG).